We begin with the raw amino-acid sequence, 218 residues long: Phosphatidylserine decarboxylase proenzyme (218 aa).

Serine 188 acts as the Schiff-base intermediate with substrate; via pyruvic acid in catalysis. The residue at position 188 (serine 188) is a Pyruvic acid (Ser); by autocatalysis.

This sequence belongs to the phosphatidylserine decarboxylase family. PSD-A subfamily. As to quaternary structure, heterodimer of a large membrane-associated beta subunit and a small pyruvoyl-containing alpha subunit. The cofactor is pyruvate. Post-translationally, is synthesized initially as an inactive proenzyme. Formation of the active enzyme involves a self-maturation process in which the active site pyruvoyl group is generated from an internal serine residue via an autocatalytic post-translational modification. Two non-identical subunits are generated from the proenzyme in this reaction, and the pyruvate is formed at the N-terminus of the alpha chain, which is derived from the carboxyl end of the proenzyme. The post-translation cleavage follows an unusual pathway, termed non-hydrolytic serinolysis, in which the side chain hydroxyl group of the serine supplies its oxygen atom to form the C-terminus of the beta chain, while the remainder of the serine residue undergoes an oxidative deamination to produce ammonia and the pyruvoyl prosthetic group on the alpha chain.

The protein localises to the cell membrane. It catalyses the reaction a 1,2-diacyl-sn-glycero-3-phospho-L-serine + H(+) = a 1,2-diacyl-sn-glycero-3-phosphoethanolamine + CO2. It participates in phospholipid metabolism; phosphatidylethanolamine biosynthesis; phosphatidylethanolamine from CDP-diacylglycerol: step 2/2. In terms of biological role, catalyzes the formation of phosphatidylethanolamine (PtdEtn) from phosphatidylserine (PtdSer). This chain is Phosphatidylserine decarboxylase proenzyme, found in Streptomyces coelicolor (strain ATCC BAA-471 / A3(2) / M145).